Reading from the N-terminus, the 239-residue chain is Ribose-5-phosphate isomerase A (239 aa).

Substrate is bound by residues 40 to 43 (SGST), 96 to 99 (DGAD), and 110 to 113 (KGGG). Glu119 (proton acceptor) is an active-site residue. Lys137 is a substrate binding site.

This sequence belongs to the ribose 5-phosphate isomerase family. In terms of assembly, homodimer.

It carries out the reaction aldehydo-D-ribose 5-phosphate = D-ribulose 5-phosphate. The protein operates within carbohydrate degradation; pentose phosphate pathway; D-ribose 5-phosphate from D-ribulose 5-phosphate (non-oxidative stage): step 1/1. Its function is as follows. Catalyzes the reversible conversion of ribose-5-phosphate to ribulose 5-phosphate. The polypeptide is Ribose-5-phosphate isomerase A (Methanococcus maripaludis (strain C6 / ATCC BAA-1332)).